Consider the following 161-residue polypeptide: UPF0225 protein GSU1048 (161 aa).

The protein belongs to the UPF0225 family.

This Geobacter sulfurreducens (strain ATCC 51573 / DSM 12127 / PCA) protein is UPF0225 protein GSU1048.